A 545-amino-acid chain; its full sequence is Membrane protein insertase YidC (545 aa).

The next 6 helical transmembrane spans lie at 10–30 (AVYL…FLFS), 319–339 (LLYF…NVIP), 341–361 (WGLS…PLTF), 407–427 (IGGC…YGLV), 467–487 (ILPF…SNVS), and 502–522 (MPIM…IYWI).

It belongs to the OXA1/ALB3/YidC family. Type 1 subfamily. As to quaternary structure, interacts with the Sec translocase complex via SecD. Specifically interacts with transmembrane segments of nascent integral membrane proteins during membrane integration.

Its subcellular location is the cell inner membrane. Required for the insertion and/or proper folding and/or complex formation of integral membrane proteins into the membrane. Involved in integration of membrane proteins that insert both dependently and independently of the Sec translocase complex, as well as at least some lipoproteins. Aids folding of multispanning membrane proteins. This is Membrane protein insertase YidC from Borrelia recurrentis (strain A1).